A 494-amino-acid chain; its full sequence is Glutamyl-tRNA(Gln) amidotransferase subunit A (494 aa).

Catalysis depends on charge relay system residues Lys72 and Ser147. Residue Ser171 is the Acyl-ester intermediate of the active site.

Belongs to the amidase family. GatA subfamily. As to quaternary structure, heterotrimer of A, B and C subunits.

It carries out the reaction L-glutamyl-tRNA(Gln) + L-glutamine + ATP + H2O = L-glutaminyl-tRNA(Gln) + L-glutamate + ADP + phosphate + H(+). Allows the formation of correctly charged Gln-tRNA(Gln) through the transamidation of misacylated Glu-tRNA(Gln) in organisms which lack glutaminyl-tRNA synthetase. The reaction takes place in the presence of glutamine and ATP through an activated gamma-phospho-Glu-tRNA(Gln). The sequence is that of Glutamyl-tRNA(Gln) amidotransferase subunit A from Methylacidiphilum infernorum (isolate V4) (Methylokorus infernorum (strain V4)).